We begin with the raw amino-acid sequence, 413 residues long: S-adenosylmethionine synthase (413 aa).

His-15 provides a ligand contact to ATP. Asp-17 contacts Mg(2+). Glu-43 serves as a coordination point for K(+). Positions 56 and 100 each coordinate L-methionine. Positions 100–110 are flexible loop; sequence QSPDISQGVNE. ATP contacts are provided by residues 171–173, 248–249, Asp-257, 263–264, Ala-280, and Lys-284; these read DGK, KF, and RK. Position 257 (Asp-257) interacts with L-methionine. An L-methionine-binding site is contributed by Lys-288.

This sequence belongs to the AdoMet synthase family. As to quaternary structure, homotetramer; dimer of dimers. The cofactor is Mg(2+). K(+) serves as cofactor.

The protein resides in the cytoplasm. The catalysed reaction is L-methionine + ATP + H2O = S-adenosyl-L-methionine + phosphate + diphosphate. It functions in the pathway amino-acid biosynthesis; S-adenosyl-L-methionine biosynthesis; S-adenosyl-L-methionine from L-methionine: step 1/1. Functionally, catalyzes the formation of S-adenosylmethionine (AdoMet) from methionine and ATP. The overall synthetic reaction is composed of two sequential steps, AdoMet formation and the subsequent tripolyphosphate hydrolysis which occurs prior to release of AdoMet from the enzyme. This is S-adenosylmethionine synthase from Prochlorococcus marinus subsp. pastoris (strain CCMP1986 / NIES-2087 / MED4).